Consider the following 72-residue polypeptide: Rubredoxin in uptake hydrogenase operon (72 aa).

Positions 19–70 (DAVLECKICWHRYDPAVGDEVWQILAGTPFAALPAHWRCPQCDGDREQFMVV) constitute a Rubredoxin-like domain. The Fe cation site is built by cysteine 24, cysteine 27, cysteine 57, and cysteine 60.

This sequence belongs to the rubredoxin family. Fe(3+) is required as a cofactor.

Its function is as follows. Could be an electron transport intermediate in hydrogen oxidation. This is Rubredoxin in uptake hydrogenase operon (hupR) from Azotobacter chroococcum mcd 1.